The following is a 504-amino-acid chain: MEEFQGYLELDRFRQHDFLYPLIFREYSYALAHGHGLNRYMLLENIGYDNKSSLLIVKRLITTMYHQNYLIISANDSKQNPFFGYNKNLHSKILSEGFAIIVEIPFYLRLISSLEGAEIVRFYNLRSIHSIFPFLEEKFPHLNYSADILIPYPAHLEILVQTLRYRVKDASYLHLLRFFLHEYSNCNSLIITNKSISIFSKSNPRFFLFLYNSYICEYESIFLFLRNQSSHLRLTSSGVLFERLCLYRKIEHFAEVFANDFPVIPCFLKDPFMHYVRYQGKSILASKDTPLLMNKWKSYLVNLWQCHFDVWSHAASIRINQLSKHSLDFLSYFSSVRRNPAVVRNQMLENSFLLNNAPNKLDTIVPIIPLIGSLAKAKFCNAVGHPISKLTRADLSDFEIINRFLHICRNLSHYYSGSSKKKNMYRIKYILRLSCVKTLARKHKSTARAFLKRVDSEFFQEFFTEEGGFISLIFPRASFALRRLYSGRVWYLDIIFINGLSNHE.

It belongs to the intron maturase 2 family. MatK subfamily.

The protein resides in the plastid. Its subcellular location is the chloroplast. Usually encoded in the trnK tRNA gene intron. Probably assists in splicing its own and other chloroplast group II introns. This chain is Maturase K, found in Quercus gemelliflora (Pasang hiris).